The following is a 355-amino-acid chain: Alanine racemase (355 aa).

Catalysis depends on Lys34, which acts as the Proton acceptor; specific for D-alanine. Lys34 carries the post-translational modification N6-(pyridoxal phosphate)lysine. Residue Arg133 participates in substrate binding. Residue Tyr249 is the Proton acceptor; specific for L-alanine of the active site. Met297 serves as a coordination point for substrate.

Belongs to the alanine racemase family. Pyridoxal 5'-phosphate is required as a cofactor.

The catalysed reaction is L-alanine = D-alanine. Its pathway is amino-acid biosynthesis; D-alanine biosynthesis; D-alanine from L-alanine: step 1/1. Catalyzes the interconversion of L-alanine and D-alanine. May also act on other amino acids. The chain is Alanine racemase (alr) from Rickettsia conorii (strain ATCC VR-613 / Malish 7).